The primary structure comprises 329 residues: Fructose-1,6-bisphosphatase class 1 (329 aa).

The Mg(2+) site is built by Glu84, Asp103, Leu105, and Asp106. Substrate-binding positions include 106 to 109 (DGSS), Asn196, and Lys262. Glu268 provides a ligand contact to Mg(2+).

Belongs to the FBPase class 1 family. Homotetramer. Mg(2+) serves as cofactor.

Its subcellular location is the cytoplasm. The enzyme catalyses beta-D-fructose 1,6-bisphosphate + H2O = beta-D-fructose 6-phosphate + phosphate. It participates in carbohydrate biosynthesis; gluconeogenesis. This is Fructose-1,6-bisphosphatase class 1 from Shewanella loihica (strain ATCC BAA-1088 / PV-4).